We begin with the raw amino-acid sequence, 118 residues long: NADH-quinone oxidoreductase subunit A 2 (118 aa).

3 helical membrane-spanning segments follow: residues 5–25, 62–82, and 87–107; these read YLPI…SVIF, LIAM…PWAV, and LGMF…VGYV.

Belongs to the complex I subunit 3 family. In terms of assembly, NDH-1 is composed of 14 different subunits. Subunits NuoA, H, J, K, L, M, N constitute the membrane sector of the complex.

The protein localises to the cell inner membrane. It catalyses the reaction a quinone + NADH + 5 H(+)(in) = a quinol + NAD(+) + 4 H(+)(out). In terms of biological role, NDH-1 shuttles electrons from NADH, via FMN and iron-sulfur (Fe-S) centers, to quinones in the respiratory chain. The immediate electron acceptor for the enzyme in this species is believed to be ubiquinone. Couples the redox reaction to proton translocation (for every two electrons transferred, four hydrogen ions are translocated across the cytoplasmic membrane), and thus conserves the redox energy in a proton gradient. This chain is NADH-quinone oxidoreductase subunit A 2, found in Citrifermentans bemidjiense (strain ATCC BAA-1014 / DSM 16622 / JCM 12645 / Bem) (Geobacter bemidjiensis).